Consider the following 454-residue polypeptide: Glutamine synthetase (454 aa).

The 87-residue stretch at Gln-25–Gly-111 folds into the GS beta-grasp domain. In terms of domain architecture, GS catalytic spans Pro-118–Phe-454. Mg(2+) is bound by residues Glu-141 and Glu-143. Glu-193 contributes to the ATP binding site. Residues Glu-198 and Glu-205 each coordinate Mg(2+). Residues Asn-249–Gly-250 and Gly-250 contribute to the L-glutamate site. Residue His-254 coordinates Mg(2+). ATP-binding positions include His-256 to Ser-258 and Ser-258. Arg-308, Glu-314, and Arg-326 together coordinate L-glutamate. ATP is bound by residues Arg-326 and Arg-331. Residue Glu-343 participates in Mg(2+) binding. L-glutamate is bound at residue Arg-345.

It belongs to the glutamine synthetase family. As to quaternary structure, oligomer of 12 subunits arranged in the form of two hexagons. In its feedback-inhibited form, interacts with TnrA in order to block its DNA-binding activity. The cofactor is Mg(2+).

The protein localises to the cytoplasm. It catalyses the reaction L-glutamate + NH4(+) + ATP = L-glutamine + ADP + phosphate + H(+). Inhibited by glutamine. Its function is as follows. Glutamine synthetase (GS) is an unusual multitasking protein that functions as an enzyme, a transcription coregulator, and a chaperone in ammonium assimilation and in the regulation of genes involved in nitrogen metabolism. It catalyzes the ATP-dependent biosynthesis of glutamine from glutamate and ammonia. Feedback-inhibited GlnA also interacts with and regulates the activity of the transcriptional regulator TnrA. During nitrogen limitation, TnrA is in its DNA-binding active state and turns on the transcription of genes required for nitrogen assimilation. Under conditions of nitrogen excess, feedback-inhibited GlnA forms a stable complex with TnrA, which inhibits its DNA-binding activity. In contrast, feedback-inhibited GlnA acts as a chaperone to stabilize the DNA-binding activity of GlnR, which represses the transcription of nitrogen assimilation genes. This Halobacterium salinarum (strain ATCC 700922 / JCM 11081 / NRC-1) (Halobacterium halobium) protein is Glutamine synthetase.